A 178-amino-acid chain; its full sequence is Acireductone dioxygenase (178 aa).

Residues 1 to 22 form a disordered region; that stretch reads MKAYWYDNKPGDQREPHDSGRP. Residues 9–22 show a composition bias toward basic and acidic residues; that stretch reads KPGDQREPHDSGRP. Positions 81, 83, 87, and 126 each coordinate Fe(2+). Residues histidine 81, histidine 83, glutamate 87, and histidine 126 each contribute to the Ni(2+) site.

This sequence belongs to the acireductone dioxygenase (ARD) family. It depends on Fe(2+) as a cofactor. Ni(2+) is required as a cofactor.

It is found in the cytoplasm. Its subcellular location is the nucleus. It catalyses the reaction 1,2-dihydroxy-5-(methylsulfanyl)pent-1-en-3-one + O2 = 4-methylsulfanyl-2-oxobutanoate + formate + 2 H(+). The enzyme catalyses 1,2-dihydroxy-5-(methylsulfanyl)pent-1-en-3-one + O2 = 3-(methylsulfanyl)propanoate + CO + formate + 2 H(+). It participates in amino-acid biosynthesis; L-methionine biosynthesis via salvage pathway; L-methionine from S-methyl-5-thio-alpha-D-ribose 1-phosphate: step 5/6. Catalyzes 2 different reactions between oxygen and the acireductone 1,2-dihydroxy-3-keto-5-methylthiopentene (DHK-MTPene) depending upon the metal bound in the active site. Fe-containing acireductone dioxygenase (Fe-ARD) produces formate and 2-keto-4-methylthiobutyrate (KMTB), the alpha-ketoacid precursor of methionine in the methionine recycle pathway. Ni-containing acireductone dioxygenase (Ni-ARD) produces methylthiopropionate, carbon monoxide and formate, and does not lie on the methionine recycle pathway. This chain is Acireductone dioxygenase (adi1), found in Emericella nidulans (strain FGSC A4 / ATCC 38163 / CBS 112.46 / NRRL 194 / M139) (Aspergillus nidulans).